Reading from the N-terminus, the 278-residue chain is Cation-dependent mannose-6-phosphate receptor (278 aa).

The signal sequence occupies residues Met-1 to Ala-21. Over Val-22–Ser-188 the chain is Lumenal. The MRH domain occupies Lys-31–Pro-182. Cys-33 and Cys-79 are disulfide-bonded. 5 N-linked (GlcNAc...) asparagine glycosylation sites follow: Asn-58, Asn-84, Asn-95, Asn-108, and Asn-114. Cystine bridges form between Cys-133/Cys-168 and Cys-146/Cys-180. The helical transmembrane segment at Val-189 to Phe-209 threads the bilayer. At Leu-210 to Met-278 the chain is on the cytoplasmic side. The segment at Tyr-256 to Met-278 is disordered. A Phosphoserine modification is found at Ser-268.

Homodimer. Binds GGA1, GGA2 and GGA3.

It is found in the lysosome membrane. Functionally, transport of phosphorylated lysosomal enzymes from the Golgi complex and the cell surface to lysosomes. Lysosomal enzymes bearing phosphomannosyl residues bind specifically to mannose-6-phosphate receptors in the Golgi apparatus and the resulting receptor-ligand complex is transported to an acidic prelyosomal compartment where the low pH mediates the dissociation of the complex. The protein is Cation-dependent mannose-6-phosphate receptor (M6pr) of Rattus norvegicus (Rat).